Reading from the N-terminus, the 241-residue chain is Orotidine 5'-phosphate decarboxylase (241 aa).

Substrate contacts are provided by residues D15, K36, 63–72 (DLKFHDIPNT), T127, R189, Q198, G218, and R219. K65 functions as the Proton donor in the catalytic mechanism.

The protein belongs to the OMP decarboxylase family. Type 1 subfamily. In terms of assembly, homodimer.

It catalyses the reaction orotidine 5'-phosphate + H(+) = UMP + CO2. It participates in pyrimidine metabolism; UMP biosynthesis via de novo pathway; UMP from orotate: step 2/2. In terms of biological role, catalyzes the decarboxylation of orotidine 5'-monophosphate (OMP) to uridine 5'-monophosphate (UMP). The protein is Orotidine 5'-phosphate decarboxylase of Prochlorococcus marinus (strain MIT 9211).